The following is a 254-amino-acid chain: 3-oxo-5-alpha-steroid 4-dehydrogenase 2 (254 aa).

4 consecutive transmembrane segments (helical) span residues 8–28 (SPVL…LYFA), 72–92 (PRSL…AHYF), 146–166 (FSLG…SDYI), and 206–226 (LATW…FLGL).

The protein belongs to the steroid 5-alpha reductase family.

It is found in the microsome membrane. The protein resides in the endoplasmic reticulum membrane. It catalyses the reaction a 3-oxo-5alpha-steroid + NADP(+) = a 3-oxo-Delta(4)-steroid + NADPH + H(+). The catalysed reaction is 17beta-hydroxy-5alpha-androstan-3-one + NADP(+) = testosterone + NADPH + H(+). It carries out the reaction 5alpha-pregnane-3,20-dione + NADP(+) = progesterone + NADPH + H(+). Converts testosterone (T) into 5-alpha-dihydrotestosterone (DHT) and progesterone or corticosterone into their corresponding 5-alpha-3-oxosteroids. It plays a central role in sexual differentiation and androgen physiology. The polypeptide is 3-oxo-5-alpha-steroid 4-dehydrogenase 2 (SRD5A2) (Sus scrofa (Pig)).